We begin with the raw amino-acid sequence, 145 residues long: Ornithine decarboxylase antizyme (145 aa).

Belongs to the ODC antizyme family. Interacts with ODC1 and thereby sterically blocks ODC homodimerization.

Its function is as follows. Ornithine decarboxylase (ODC) antizyme protein that negatively regulates ODC activity and intracellular polyamine biosynthesis and uptake in response to increased intracellular polyamine levels. Binds to ODC monomers, inhibiting the assembly of the functional ODC homodimer, and targets the monomers for ubiquitin-independent proteolytic destruction by the 26S proteasome. In Onchocerca volvulus, this protein is Ornithine decarboxylase antizyme.